The primary structure comprises 1486 residues: Homeobox protein cut-like 2 (1486 aa).

A disordered region spans residues 114–167 (DRLQPPSFDPSGQPRRDLHTSWKRNPELLSPKEQREGTSPAGPTLTEGSRLPGI). Positions 127 to 149 (PRRDLHTSWKRNPELLSPKEQRE) are enriched in basic and acidic residues. Position 143 is a phosphoserine (Ser-143). Residues 195–374 (TLAARLGEAE…IKTELSILKA (180 aa)) adopt a coiled-coil conformation. 6 disordered regions span residues 415-481 (LLAS…LSPF), 517-549 (PTAP…PGAE), 661-690 (EIES…STSE), 716-758 (VAPR…AQAP), 800-858 (YASV…EGAT), and 964-1032 (GQAV…SGSQ). The span at 419–428 (PEEDPSEDDS) shows a compositional bias: acidic residues. Pro residues predominate over residues 443-460 (QQLPPPPGPEDPLSPSPG). Residues 461–470 (QPLLGPSLGP) are compositionally biased toward low complexity. The span at 517–532 (PTAPATPAPGPEPLGG) shows a compositional bias: pro residues. Positions 544–631 (AGPGAEEEQL…VLALRTIQVR (88 aa)) form a DNA-binding region, CUT 1. The segment covering 680-690 (ANGTTPASTSE) has biased composition (polar residues). Residues 690–717 (EDAIKSILEQARREMQAQQQALLEMEVA) are a coiled coil. A compositionally biased stretch (low complexity) spans 802-816 (SVSPSLSSSSSSGYS). Residues 834 to 844 (PEDEAAAGAED) are compositionally biased toward acidic residues. A compositionally biased stretch (basic and acidic residues) spans 845–854 (EPPRTGELKA). Positions 887-974 (QYELYMYREV…QAVGQQPGAS (88 aa)) form a DNA-binding region, CUT 2. Residues 967 to 976 (VGQQPGASQA) are compositionally biased toward polar residues. Residues 1017–1031 (GRSSSSLSGKMYSGS) are compositionally biased toward low complexity. Positions 1038–1125 (QEIVAMSPEL…VEKLRDMKKL (88 aa)) form a DNA-binding region, CUT 3. The segment at residues 1168-1227 (IKKPRVVLAPEEKEALRKAYQLEPYPSQQTIELLSFQLNLKTNTVINWFHNYRSRMRREM) is a DNA-binding region (homeobox). The disordered stretch occupies residues 1231–1453 (GTQDEPDLDP…ALHPSAKVNP (223 aa)). Residues 1266-1276 (EDQKPTVKELE) are compositionally biased toward basic and acidic residues. Residues 1283–1293 (ENSTPLTTQDK) show a composition bias toward polar residues. The segment covering 1320-1334 (ELDKGQGPPKEEHPD) has biased composition (basic and acidic residues). The span at 1381 to 1401 (KSASESSRCSLEVSLNSPSAA) shows a compositional bias: polar residues. Over residues 1402-1420 (SSPGLMMSVSPVPSSSAPI) the composition is skewed to low complexity. Residues 1421-1431 (SPSPPGAPPAK) are compositionally biased toward pro residues.

It belongs to the CUT homeobox family.

It localises to the nucleus. Its function is as follows. Transcription factor involved in the control of neuronal proliferation and differentiation in the brain. Regulates dendrite development and branching, dendritic spine formation, and synaptogenesis in cortical layers II-III. Binds to DNA in a sequence-specific manner. This Homo sapiens (Human) protein is Homeobox protein cut-like 2 (CUX2).